We begin with the raw amino-acid sequence, 157 residues long: Nascent polypeptide-associated complex subunit beta (157 aa).

Positions 1–31 (MPVDPEKLAKLQKSTAKKVGGSRVKAKKGVK) are disordered. The NAC-A/B domain occupies 33–98 (EQDDTKLIET…PQEKNITQLI (66 aa)). Residues 125–157 (NPKDFGAAGEAGATEEANEDIPDLVDQKFDDVE) are disordered. A compositionally biased stretch (low complexity) spans 130 to 139 (GAAGEAGATE).

It belongs to the NAC-beta family. Part of the nascent polypeptide-associated complex (NAC), consisting of EGD2 and EGD1. NAC associates with ribosomes via EGD1.

The protein resides in the cytoplasm. Its subcellular location is the nucleus. Its function is as follows. Component of the nascent polypeptide-associated complex (NAC), a dynamic component of the ribosomal exit tunnel, protecting the emerging polypeptides from interaction with other cytoplasmic proteins to ensure appropriate nascent protein targeting. The NAC complex also promotes mitochondrial protein import by enhancing productive ribosome interactions with the outer mitochondrial membrane and blocks the inappropriate interaction of ribosomes translating non-secretory nascent polypeptides with translocation sites in the membrane of the endoplasmic reticulum. EGD1 may act as a transcription factor that exert a negative effect on the expression of several genes that are transcribed by RNA polymerase II. This chain is Nascent polypeptide-associated complex subunit beta (EGD1), found in Lodderomyces elongisporus (strain ATCC 11503 / CBS 2605 / JCM 1781 / NBRC 1676 / NRRL YB-4239) (Yeast).